We begin with the raw amino-acid sequence, 131 residues long: Large ribosomal subunit protein bL12 (131 aa).

Over residues 100–125 the composition is skewed to basic and acidic residues; that stretch reads STPKPIKEGISKEDAEAAKKQLEDAG. The disordered stretch occupies residues 100–131; it reads STPKPIKEGISKEDAEAAKKQLEDAGGKVSIK.

This sequence belongs to the bacterial ribosomal protein bL12 family. Homodimer. Part of the ribosomal stalk of the 50S ribosomal subunit. Forms a multimeric L10(L12)X complex, where L10 forms an elongated spine to which 2 to 4 L12 dimers bind in a sequential fashion. Binds GTP-bound translation factors.

Functionally, forms part of the ribosomal stalk which helps the ribosome interact with GTP-bound translation factors. Is thus essential for accurate translation. The sequence is that of Large ribosomal subunit protein bL12 from Cyanothece sp. (strain PCC 7425 / ATCC 29141).